A 547-amino-acid polypeptide reads, in one-letter code: Glucose-6-phosphate isomerase (547 aa).

The Proton donor role is filled by Glu350. Active-site residues include His381 and Lys510.

Belongs to the GPI family.

The protein resides in the cytoplasm. The enzyme catalyses alpha-D-glucose 6-phosphate = beta-D-fructose 6-phosphate. The protein operates within carbohydrate biosynthesis; gluconeogenesis. Its pathway is carbohydrate degradation; glycolysis; D-glyceraldehyde 3-phosphate and glycerone phosphate from D-glucose: step 2/4. Functionally, catalyzes the reversible isomerization of glucose-6-phosphate to fructose-6-phosphate. The sequence is that of Glucose-6-phosphate isomerase from Mesorhizobium japonicum (strain LMG 29417 / CECT 9101 / MAFF 303099) (Mesorhizobium loti (strain MAFF 303099)).